The chain runs to 149 residues: 3-dehydroquinate dehydratase (149 aa).

Residue Tyr26 is the Proton acceptor of the active site. Substrate contacts are provided by Asn78, His84, and Asp91. His104 acts as the Proton donor in catalysis. Residues 105–106 (IS) and Arg115 contribute to the substrate site.

This sequence belongs to the type-II 3-dehydroquinase family. As to quaternary structure, homododecamer.

The enzyme catalyses 3-dehydroquinate = 3-dehydroshikimate + H2O. It functions in the pathway metabolic intermediate biosynthesis; chorismate biosynthesis; chorismate from D-erythrose 4-phosphate and phosphoenolpyruvate: step 3/7. Catalyzes a trans-dehydration via an enolate intermediate. The protein is 3-dehydroquinate dehydratase (aroQ) of Buchnera aphidicola subsp. Schizaphis graminum (strain Sg).